The primary structure comprises 352 residues: uncharacterized protein (352 aa).

The stretch at 285–352 (FQHLRNARER…IKSEIRRLQR (68 aa)) forms a coiled coil.

This is an uncharacterized protein from Emericella nidulans (strain FGSC A4 / ATCC 38163 / CBS 112.46 / NRRL 194 / M139) (Aspergillus nidulans).